The sequence spans 388 residues: Histone H2A.Y (388 aa).

LRR repeat units lie at residues 54 to 75 (SLQM…PHVP), 76 to 96 (SLIR…QYLR), and 100 to 121 (HLQT…KRLG). An LRRCT domain is found at 134-172 (NPVVNTNNYRNLVFNLFPSLVILDTLDKNGIDQEKAALD). A disordered region spans residues 256 to 279 (RKAPASRNGGVPSKAGKGKMNAFS).

It belongs to the histone H2A family. The nucleosome is a histone octamer containing two molecules each of H2A, H2B, H3 and H4 assembled in one H3-H4 heterotetramer and two H2A-H2B heterodimers. The octamer wraps approximately 147 bp of DNA.

It localises to the nucleus. The protein resides in the chromosome. In terms of biological role, variant histone H2A which replaces conventional H2A in a subset of nucleosomes. Nucleosomes wrap and compact DNA into chromatin, limiting DNA accessibility to the cellular machineries which require DNA as a template. Histones thereby play a central role in transcription regulation, DNA repair, DNA replication and chromosomal stability. DNA accessibility is regulated via a complex set of post-translational modifications of histones, also called histone code, and nucleosome remodeling. The protein is Histone H2A.Y (HTAY) of Tetrahymena thermophila (strain SB210).